A 244-amino-acid polypeptide reads, in one-letter code: tRNA pseudouridine synthase B (244 aa).

Asp-46 serves as the catalytic Nucleophile.

The protein belongs to the pseudouridine synthase TruB family. Type 1 subfamily.

The catalysed reaction is uridine(55) in tRNA = pseudouridine(55) in tRNA. Responsible for synthesis of pseudouridine from uracil-55 in the psi GC loop of transfer RNAs. In Bordetella bronchiseptica (strain ATCC BAA-588 / NCTC 13252 / RB50) (Alcaligenes bronchisepticus), this protein is tRNA pseudouridine synthase B.